The sequence spans 78 residues: Putative defensin-like protein 133 (78 aa).

The N-terminal stretch at 1-24 is a signal peptide; it reads MKRSFLLLLTILTIFIILGQGVMG. Disulfide bonds link Cys-34–Cys-75, Cys-44–Cys-68, Cys-49–Cys-72, and Cys-53–Cys-74.

Belongs to the DEFL family.

The protein localises to the secreted. In Arabidopsis thaliana (Mouse-ear cress), this protein is Putative defensin-like protein 133 (LCR33).